A 518-amino-acid chain; its full sequence is Protein translocase subunit SecD (518 aa).

Transmembrane regions (helical) follow at residues 9–29, 356–376, 377–397, 406–426, 451–473, and 486–506; these read IVLS…NFIQ, GKKA…LSYG, VIGL…LALL, LPGI…NVLI, AFAT…YIFG, and IGII…IDIW.

The protein belongs to the SecD/SecF family. SecD subfamily. In terms of assembly, forms a complex with SecF. Part of the essential Sec protein translocation apparatus which comprises SecA, SecYEG and auxiliary proteins SecDF-YajC and YidC.

The protein localises to the cell inner membrane. Its function is as follows. Part of the Sec protein translocase complex. Interacts with the SecYEG preprotein conducting channel. SecDF uses the proton motive force (PMF) to complete protein translocation after the ATP-dependent function of SecA. In Rickettsia typhi (strain ATCC VR-144 / Wilmington), this protein is Protein translocase subunit SecD.